The primary structure comprises 367 residues: DNA replication and repair protein RecF (367 aa).

Residue Gly30 to Thr37 coordinates ATP.

It belongs to the RecF family.

The protein localises to the cytoplasm. The RecF protein is involved in DNA metabolism; it is required for DNA replication and normal SOS inducibility. RecF binds preferentially to single-stranded, linear DNA. It also seems to bind ATP. The sequence is that of DNA replication and repair protein RecF from Chlamydia caviae (strain ATCC VR-813 / DSM 19441 / 03DC25 / GPIC) (Chlamydophila caviae).